Reading from the N-terminus, the 70-residue chain is DNA-directed RNA polymerase subunit omega (70 aa).

Belongs to the RNA polymerase subunit omega family. The RNAP catalytic core consists of 2 alpha, 1 beta, 1 beta' and 1 omega subunit. When a sigma factor is associated with the core the holoenzyme is formed, which can initiate transcription.

The enzyme catalyses RNA(n) + a ribonucleoside 5'-triphosphate = RNA(n+1) + diphosphate. Its function is as follows. Promotes RNA polymerase assembly. Latches the N- and C-terminal regions of the beta' subunit thereby facilitating its interaction with the beta and alpha subunits. The protein is DNA-directed RNA polymerase subunit omega of Bacillus anthracis.